Here is a 61-residue protein sequence, read N- to C-terminus: Large ribosomal subunit protein uL30 (61 aa).

It belongs to the universal ribosomal protein uL30 family. As to quaternary structure, part of the 50S ribosomal subunit.

The polypeptide is Large ribosomal subunit protein uL30 (Colwellia psychrerythraea (strain 34H / ATCC BAA-681) (Vibrio psychroerythus)).